Consider the following 99-residue polypeptide: Putative septation protein SpoVG (99 aa).

This sequence belongs to the SpoVG family.

In terms of biological role, could be involved in septation. The protein is Putative septation protein SpoVG of Myxococcus xanthus (strain DK1622).